The following is a 156-amino-acid chain: Small ribosomal subunit protein uS7 (156 aa).

This sequence belongs to the universal ribosomal protein uS7 family. Part of the 30S ribosomal subunit. Contacts proteins S9 and S11.

In terms of biological role, one of the primary rRNA binding proteins, it binds directly to 16S rRNA where it nucleates assembly of the head domain of the 30S subunit. Is located at the subunit interface close to the decoding center, probably blocks exit of the E-site tRNA. In Bradyrhizobium sp. (strain BTAi1 / ATCC BAA-1182), this protein is Small ribosomal subunit protein uS7.